The primary structure comprises 310 residues: Protein A56 (310 aa).

An N-terminal signal peptide occupies residues 1–16 (MKQLSIVILLLSIVYT). Topologically, residues 17 to 275 (TKPHPTQISK…TKYTTSDFIE (259 aa)) are virion surface. The 103-residue stretch at 19-121 (PHPTQISKKL…TNDTDKIDYE (103 aa)) folds into the Ig-like V-type domain. The cysteines at positions 36 and 105 are disulfide-linked. 3 N-linked (GlcNAc...) asparagine; by host glycosylation sites follow: Asn39, Asn113, and Asn133. Residues 153–195 (HTEEQHDSDTTICTSESTTQISETSESTTSSQISETSESTSYG) form a disordered region. Residues 162–193 (TTICTSESTTQISETSESTTSSQISETSESTS) are compositionally biased toward low complexity. Asn203 carries N-linked (GlcNAc...) asparagine; by host glycosylation. Residues 276–300 (IFGIVSLILLLAVAIFCIIYYFCSG) traverse the membrane as a helical segment. Residues 301 to 310 (RSRKQETNIL) are Intravirion-facing.

Heterodimerizes with K2. The heterodimer A56/K2 interacts with components of the entry fusion complex A16 and G9. Interacts with K2 protein. Heterodimer with C3/VPC protein; disulfide-linked. Glycosylated; contains phosphate and sulfate-substituted glycans. O-glycosylation is required for hemagglutination and hemadsorption activities of infected cell membranes.

It is found in the virion membrane. The protein resides in the host membrane. Prevents cell to cell fusion by interacting with and directing the viral K2 protein on the host plasma membrane. The A56-K2 complex associates with components of the entry fusion complex (EFC) presumably to avoid superinfection and syncytium formation. Via its interaction with C3/VCP protein, protects the infected cell and probably also the extracellular enveloped virus from complement attack. This is Protein A56 (HA) from Raccoon poxvirus (RCN).